Reading from the N-terminus, the 31-residue chain is DTTPCGESCVWIPCVSSIVGCSCQNKVCYQN.

Residues Asp-1 to Asn-31 constitute a cross-link (cyclopeptide (Asp-Asn)). 3 disulfides stabilise this stretch: Cys-5/Cys-21, Cys-9/Cys-23, and Cys-14/Cys-28.

Post-translationally, contains 3 disulfide bonds. This is a cyclic peptide. As to expression, expressed in seed but not in root nodules.

Its function is as follows. Probably participates in a plant defense mechanism. Not active against Gram-negative bacterium E.coli ATCC 700926 or Gram-positive bacterium S.aureus ATCC 12600 up to a concentration of 100 uM under low-salt conditions. The protein is Cliotide T13 of Clitoria ternatea (Butterfly pea).